A 346-amino-acid chain; its full sequence is MESRIKVLVVDDSAFMRKVITSMLESDPRLEVVGTARNGEDALKKRKTLAPDVMTLDVEMPVMDGIETLKRLMSENPLPIIIVSSTTKEGAENALTAMELGAVDFITKPSGPISLDLEKVRDLLIEKVASAPNVKLKPTSKKAPVVFRPLQQPVPFDKTIIVIGTSTGGPKALKQVLTKLPKDLPAPILIVQHMPAGFTESLANRLNSLCEIHVKEAEDGEIIRPGVAYIAPGGYHLETKRLGTSIALHLTKEEPRKGHRPSVDVLFESVSALSSIYKVAVIMTGMGSDGTEGLEQLKRGSCYAIAESEQSCVVFGMPKVAIERKLVDEVTHLELIADSIVRQCKR.

One can recognise a Response regulatory domain in the interval 6–123 (KVLVVDDSAF…SLDLEKVRDL (118 aa)). Asp57 carries the 4-aspartylphosphate modification. The CheB-type methylesterase domain occupies 155 to 346 (PFDKTIIVIG…ADSIVRQCKR (192 aa)). Active-site residues include Ser166, His193, and Asp289.

This sequence belongs to the CheB family. Phosphorylated by CheA. Phosphorylation of the N-terminal regulatory domain activates the methylesterase activity.

The protein localises to the cytoplasm. The enzyme catalyses [protein]-L-glutamate 5-O-methyl ester + H2O = L-glutamyl-[protein] + methanol + H(+). It carries out the reaction L-glutaminyl-[protein] + H2O = L-glutamyl-[protein] + NH4(+). Functionally, involved in chemotaxis. Part of a chemotaxis signal transduction system that modulates chemotaxis in response to various stimuli. Catalyzes the demethylation of specific methylglutamate residues introduced into the chemoreceptors (methyl-accepting chemotaxis proteins or MCP) by CheR. Also mediates the irreversible deamidation of specific glutamine residues to glutamic acid. The protein is Protein-glutamate methylesterase/protein-glutamine glutaminase of Halalkalibacterium halodurans (strain ATCC BAA-125 / DSM 18197 / FERM 7344 / JCM 9153 / C-125) (Bacillus halodurans).